Reading from the N-terminus, the 708-residue chain is GID complex associated protein 12 (708 aa).

Positions 381-396 are enriched in low complexity; sequence SSRRNSSFSTASSEPR. The tract at residues 381 to 403 is disordered; it reads SSRRNSSFSTASSEPRPLSRRRR.

Interacts with core components of the GID/CTLH ubiquitin ligase complex. GID12 binds both the substrate receptor GID4 and the tip of GID5 in the scaffolding module, sealing GID4 onto the scaffold.

Functionally, regulator of the GID E3 ligase complex. Modulates both assembly of the substrate receptor GID4 into the GID E3 ligase complex and its activity toward its substrates. GID12-binding remodels the N-degron binding pocket in the GID(SR4) complex, and could limit substrate accessibility of a bulky substrate to a ubiquitynation active site, thereby stabilizing gluconeogenic enzyme substrates. Involved in actin patch formation. The protein is GID complex associated protein 12 of Saccharomyces cerevisiae (strain ATCC 204508 / S288c) (Baker's yeast).